The following is a 447-amino-acid chain: Neuraminidase (447 aa).

Topologically, residues 1–6 are intravirion; the sequence is MNPNQK. Residues 7–27 form a helical membrane-spanning segment; the sequence is IITIGSICMGIGIISLILQIG. The involved in apical transport and lipid raft association stretch occupies residues 11-33; sequence GSICMGIGIISLILQIGNIISMW. Topologically, residues 28 to 447 are virion surface; the sequence is NIISMWVSHS…GAELPFTIDK (420 aa). The tract at residues 36 to 68 is hypervariable stalk region; sequence HSIQTENQNHHEACNPSIAGQDAASVALAGNSS. N-linked (GlcNAc...) asparagine; by host glycosylation occurs at N66. The segment at 69–447 is head of neuraminidase; the sequence is LCPISGWAIY…GAELPFTIDK (379 aa). 8 cysteine pairs are disulfide-bonded: C70/C395, C102/C107, C162/C209, C211/C216, C257/C270, C259/C268, C296/C313, and C399/C424. R96 contacts substrate. N124 carries N-linked (GlcNAc...) asparagine; by host glycosylation. The active-site Proton donor/acceptor is the D129. A substrate-binding site is contributed by R130. A glycan (N-linked (GlcNAc...) asparagine; by host) is linked at N213. 255-256 provides a ligand contact to substrate; it reads EE. R271 provides a ligand contact to substrate. D272, G276, and D302 together coordinate Ca(2+). R346 is a binding site for substrate. Y380 functions as the Nucleophile in the catalytic mechanism.

It belongs to the glycosyl hydrolase 34 family. In terms of assembly, homotetramer. Ca(2+) serves as cofactor. In terms of processing, N-glycosylated.

The protein resides in the virion membrane. The protein localises to the host apical cell membrane. The enzyme catalyses Hydrolysis of alpha-(2-&gt;3)-, alpha-(2-&gt;6)-, alpha-(2-&gt;8)- glycosidic linkages of terminal sialic acid residues in oligosaccharides, glycoproteins, glycolipids, colominic acid and synthetic substrates.. Inhibited by the neuraminidase inhibitors zanamivir (Relenza) and oseltamivir (Tamiflu). These drugs interfere with the release of progeny virus from infected cells and are effective against all influenza strains. Resistance to neuraminidase inhibitors is quite rare. In terms of biological role, catalyzes the removal of terminal sialic acid residues from viral and cellular glycoconjugates. Cleaves off the terminal sialic acids on the glycosylated HA during virus budding to facilitate virus release. Additionally helps virus spread through the circulation by further removing sialic acids from the cell surface. These cleavages prevent self-aggregation and ensure the efficient spread of the progeny virus from cell to cell. Otherwise, infection would be limited to one round of replication. Described as a receptor-destroying enzyme because it cleaves a terminal sialic acid from the cellular receptors. May facilitate viral invasion of the upper airways by cleaving the sialic acid moieties on the mucin of the airway epithelial cells. Likely to plays a role in the budding process through its association with lipid rafts during intracellular transport. May additionally display a raft-association independent effect on budding. Plays a role in the determination of host range restriction on replication and virulence. Sialidase activity in late endosome/lysosome traffic seems to enhance virus replication. This is Neuraminidase from Aves.